A 221-amino-acid chain; its full sequence is Putative adhesin P1-like protein MPN_131 (221 aa).

The segment covering 13–36 (RYGNNHRGSNSSTSGVTTQGQSQN) has biased composition (low complexity). Disordered regions lie at residues 13-51 (RYGN…NVGV) and 90-183 (GWRN…TPSG). Polar residues predominate over residues 37–48 (ASSNEPAPTFSN). Residues 130-139 (LKQDKADKSG) are compositionally biased toward basic and acidic residues. Composition is skewed to polar residues over residues 149–160 (SGDNLTNYTNLP) and 174–183 (HSPTRTTPSG).

Belongs to the adhesin P1 family.

In Mycoplasma pneumoniae (strain ATCC 29342 / M129 / Subtype 1) (Mycoplasmoides pneumoniae), this protein is Putative adhesin P1-like protein MPN_131.